The following is a 408-amino-acid chain: GTPase Obg (408 aa).

In terms of domain architecture, Obg spans 1–159 (MKFFDEARIE…RNLHLELKVL (159 aa)). In terms of domain architecture, OBG-type G spans 160–334 (ADVGLLGMPN…LIFALQDFLD (175 aa)). Residues 166-173 (GMPNAGKS), 191-195 (FTTLQ), 213-216 (DIPG), 284-287 (NKLD), and 315-317 (SAL) contribute to the GTP site. Residues S173 and T193 each contribute to the Mg(2+) site. A disordered region spans residues 385–408 (AEDALAEDALDDDADGEDADPNAR).

This sequence belongs to the TRAFAC class OBG-HflX-like GTPase superfamily. OBG GTPase family. In terms of assembly, monomer. Mg(2+) is required as a cofactor.

Its subcellular location is the cytoplasm. An essential GTPase which binds GTP, GDP and possibly (p)ppGpp with moderate affinity, with high nucleotide exchange rates and a fairly low GTP hydrolysis rate. Plays a role in control of the cell cycle, stress response, ribosome biogenesis and in those bacteria that undergo differentiation, in morphogenesis control. The polypeptide is GTPase Obg (Azoarcus sp. (strain BH72)).